We begin with the raw amino-acid sequence, 85 residues long: Large ribosomal subunit protein bL27 (85 aa).

The disordered stretch occupies residues Met-1–Arg-20.

This sequence belongs to the bacterial ribosomal protein bL27 family.

The polypeptide is Large ribosomal subunit protein bL27 (Actinobacillus pleuropneumoniae serotype 5b (strain L20)).